The following is a 370-amino-acid chain: Ubiquinone biosynthesis O-methyltransferase, mitochondrial (370 aa).

The N-terminal 86 residues, Met1–Tyr86, are a transit peptide targeting the mitochondrion. Residue Arg125 participates in S-adenosyl-L-methionine binding. Residues Lys144 and Lys150 each carry the N6-acetyllysine modification. Gly155 and Asp176 together coordinate S-adenosyl-L-methionine. Lys197 is modified (N6-acetyllysine). Ser223 provides a ligand contact to S-adenosyl-L-methionine. Glu224, Glu227, and His228 together coordinate Mg(2+). The interval Ala336–Thr370 is disordered.

This sequence belongs to the class I-like SAM-binding methyltransferase superfamily. UbiG/COQ3 family. Component of a multi-subunit COQ enzyme complex, composed of at least COQ3, COQ4, COQ5, COQ6, COQ7 and COQ9. Mg(2+) is required as a cofactor.

Its subcellular location is the mitochondrion inner membrane. It carries out the reaction 3,4-dihydroxy-5-(all-trans-decaprenyl)benzoate + S-adenosyl-L-methionine = 4-hydroxy-3-methoxy-5-(all-trans-decaprenyl)benzoate + S-adenosyl-L-homocysteine + H(+). The catalysed reaction is a 3-demethylubiquinone + S-adenosyl-L-methionine = a ubiquinone + S-adenosyl-L-homocysteine. It catalyses the reaction 3-demethylubiquinol-10 + S-adenosyl-L-methionine = ubiquinol-10 + S-adenosyl-L-homocysteine + H(+). It functions in the pathway cofactor biosynthesis; ubiquinone biosynthesis. Its function is as follows. O-methyltransferase required for two non-consecutive steps during ubiquinone biosynthesis. Catalyzes the 2 O-methylation of 3,4-dihydroxy-5-(all-trans-decaprenyl)benzoic acid into 4-hydroxy-3-methoxy-5-(all-trans-decaprenyl)benzoic acid. Also catalyzes the last step of ubiquinone biosynthesis by mediating methylation of 3-demethylubiquinone into ubiquinone. Also able to mediate the methylation of 3-demethylubiquinol-10 into ubiquinol-10. In Mus musculus (Mouse), this protein is Ubiquinone biosynthesis O-methyltransferase, mitochondrial.